The sequence spans 57 residues: Small hydrophobic protein (57 aa).

At 1–8 (MPAIQPPL) the chain is on the virion surface side. The helical transmembrane segment at 9-29 (YPTFLLLILLSLIITLYVWII) threads the bilayer. Topologically, residues 30-57 (STITYKTAVRHAALHQRSFSRWSLDHSL) are intravirion.

The protein belongs to the rubulavirus small hydrophobic protein family. As to quaternary structure, interacts with host TNFRSF1A, RIPK1 and IRAK1; these interactions interfere with host NF-kappa-B activation at the level of receptor complexes. Interacts with host protein UBQLN4.

It localises to the virion membrane. The protein resides in the host cell membrane. In terms of biological role, plays a role in the inhibition of the host NF-kappa-B pathway. This inhibition occurs at the receptor level, by preventing the signaling of TNFR1 as well as IL-1R and TLR3. This is Small hydrophobic protein (SH) from Mumps virus genotype B (strain Miyahara vaccine) (MuV).